Here is a 193-residue protein sequence, read N- to C-terminus: uncharacterized protein (193 aa).

A signal peptide spans Met-1–Ser-14.

This is an uncharacterized protein from Saccharomyces cerevisiae (strain ATCC 204508 / S288c) (Baker's yeast).